Reading from the N-terminus, the 373-residue chain is Transaldolase (373 aa).

Catalysis depends on Lys143, which acts as the Schiff-base intermediate with substrate.

It belongs to the transaldolase family. Type 2 subfamily.

The protein resides in the cytoplasm. It catalyses the reaction D-sedoheptulose 7-phosphate + D-glyceraldehyde 3-phosphate = D-erythrose 4-phosphate + beta-D-fructose 6-phosphate. It functions in the pathway carbohydrate degradation; pentose phosphate pathway; D-glyceraldehyde 3-phosphate and beta-D-fructose 6-phosphate from D-ribose 5-phosphate and D-xylulose 5-phosphate (non-oxidative stage): step 2/3. Transaldolase is important for the balance of metabolites in the pentose-phosphate pathway. This is Transaldolase from Mycobacterium ulcerans (strain Agy99).